The following is a 337-amino-acid chain: Cytoskeleton protein RodZ (337 aa).

The Cytoplasmic portion of the chain corresponds to 1 to 111; that stretch reads MNTEATHDQN…LGKRRKKRDG (111 aa). The HTH cro/C1-type domain occupies 19 to 71; the sequence is LRNAREQLGLSQQAVAERLCLKVSTVRDIEEDKAPADLASTFLRGYIRSYARL. Positions 30–49 form a DNA-binding region, H-T-H motif; the sequence is QQAVAERLCLKVSTVRDIEE. Residues 112–132 traverse the membrane as a helical; Signal-anchor for type II membrane protein segment; it reads WLMTFTWLVLFVVIGLSGAWW. The Periplasmic portion of the chain corresponds to 133–337; sequence WQDHKAQQEE…TLNAEQSPAQ (205 aa). Residues 145–167 show a composition bias toward polar residues; it reads TMADQSSAELSSNSEQGQSVPLN. A disordered region spans residues 145 to 220; sequence TMADQSSAEL…VSPSQANVDT (76 aa). Residues 168-207 show a composition bias toward low complexity; that stretch reads TSTTTDPATTSTPPASVDTTATNTQTPAVTAPAPAVDPQQ. Polar residues predominate over residues 208-218; it reads NAVVSPSQANV.

This sequence belongs to the RodZ family.

Its subcellular location is the cell inner membrane. Its function is as follows. Cytoskeletal protein that is involved in cell-shape control through regulation of the length of the long axis. The sequence is that of Cytoskeleton protein RodZ from Escherichia coli O17:K52:H18 (strain UMN026 / ExPEC).